The primary structure comprises 626 residues: DNA mismatch repair protein MutL (626 aa).

It belongs to the DNA mismatch repair MutL/HexB family.

Functionally, this protein is involved in the repair of mismatches in DNA. It is required for dam-dependent methyl-directed DNA mismatch repair. May act as a 'molecular matchmaker', a protein that promotes the formation of a stable complex between two or more DNA-binding proteins in an ATP-dependent manner without itself being part of a final effector complex. The protein is DNA mismatch repair protein MutL of Cellvibrio japonicus (strain Ueda107) (Pseudomonas fluorescens subsp. cellulosa).